A 222-amino-acid chain; its full sequence is MGEASRDEYKIQSFDAETQQLLKTALKDPGAVDLERVANVIVDHSLQDCVFSKEAGRMCYAIIQAESKQAGQSVFRRGLLNRLQKEYDAREQLRACSLQGWVCYVTFICNIFDYLRVNNMPMMALVNPVYDCLFQLAQPESLSREEEVDCLVLQLHRVGEQLEKMNGQRMDELFILIRDGFLLPIDLSSLARLLLLEIIEFRAAGWKTTPAAHKYYYSEVSD.

One can recognise an MIF4G domain in the interval 3 to 205 (EASRDEYKIQ…LEIIEFRAAG (203 aa)).

Belongs to the MIF4GD family. In terms of assembly, interacts with EIF4G1, EIF4G2 and SLBP; probably tethered by SLBP to the 3'-end of mRNAs ending with the histone stem-loop, it also interacts with EIF4G1 which is bound to their 5'-end.

It localises to the cytoplasm. The protein localises to the nucleus. Its function is as follows. Functions in replication-dependent translation of histone mRNAs which differ from other eukaryotic mRNAs in that they do not end with a poly-A tail but a stem-loop. May participate in circularizing those mRNAs specifically enhancing their translation. In Rattus norvegicus (Rat), this protein is MIF4G domain-containing protein (Mif4gd).